Here is a 201-residue protein sequence, read N- to C-terminus: Recombination protein RecR (201 aa).

The segment at 60–75 (CRSCGNVDTSDPCTIC) adopts a C4-type zinc-finger fold. The Toprim domain maps to 83–178 (TTLVVVEDVS…TVTRLAHGVP (96 aa)).

The protein belongs to the RecR family.

In terms of biological role, may play a role in DNA repair. It seems to be involved in an RecBC-independent recombinational process of DNA repair. It may act with RecF and RecO. In Methylorubrum extorquens (strain CM4 / NCIMB 13688) (Methylobacterium extorquens), this protein is Recombination protein RecR.